We begin with the raw amino-acid sequence, 693 residues long: Elongation factor G (693 aa).

Residues 8 to 282 enclose the tr-type G domain; sequence EKTRNIGIMA…AVIDYLPSPL (275 aa). GTP-binding positions include 17 to 24, 81 to 85, and 135 to 138; these read AHVDAGKT, DTPGH, and NKMD.

Belongs to the TRAFAC class translation factor GTPase superfamily. Classic translation factor GTPase family. EF-G/EF-2 subfamily.

It localises to the cytoplasm. Its function is as follows. Catalyzes the GTP-dependent ribosomal translocation step during translation elongation. During this step, the ribosome changes from the pre-translocational (PRE) to the post-translocational (POST) state as the newly formed A-site-bound peptidyl-tRNA and P-site-bound deacylated tRNA move to the P and E sites, respectively. Catalyzes the coordinated movement of the two tRNA molecules, the mRNA and conformational changes in the ribosome. In Streptococcus pneumoniae (strain Hungary19A-6), this protein is Elongation factor G.